The following is a 468-amino-acid chain: Arginine biosynthesis bifunctional protein ArgJ, mitochondrial (468 aa).

The N-terminal 23 residues, Met1 to Phe23, are a transit peptide targeting the mitochondrion. Substrate is bound by residues Thr198, Lys227, Thr238, Glu324, Asn463, and Thr468. Thr238 serves as the catalytic Nucleophile.

The protein belongs to the ArgJ family. Heterodimer of an alpha and a beta chain. The alpha and beta chains are autoproteolytically processed from a single precursor protein within the mitochondrion.

Its subcellular location is the mitochondrion matrix. The catalysed reaction is N(2)-acetyl-L-ornithine + L-glutamate = N-acetyl-L-glutamate + L-ornithine. It carries out the reaction L-glutamate + acetyl-CoA = N-acetyl-L-glutamate + CoA + H(+). The protein operates within amino-acid biosynthesis; L-arginine biosynthesis; L-ornithine and N-acetyl-L-glutamate from L-glutamate and N(2)-acetyl-L-ornithine (cyclic): step 1/1. Its pathway is amino-acid biosynthesis; L-arginine biosynthesis; N(2)-acetyl-L-ornithine from L-glutamate: step 1/4. Its function is as follows. Catalyzes two activities which are involved in the cyclic version of arginine biosynthesis: the synthesis of acetylglutamate from glutamate and acetyl-CoA, and of ornithine by transacetylation between acetylornithine and glutamate. The protein is Arginine biosynthesis bifunctional protein ArgJ, mitochondrial of Podospora anserina (strain S / ATCC MYA-4624 / DSM 980 / FGSC 10383) (Pleurage anserina).